Reading from the N-terminus, the 267-residue chain is Thiamine thiazole synthase (267 aa).

NAD(+)-binding positions include Ser-41, 60–61 (ER), Gly-68, Val-132, and 160–162 (HVD). Residues Asp-162 and His-177 each coordinate Fe cation. Met-227 provides a ligand contact to NAD(+). Arg-237 serves as a coordination point for glycine.

Belongs to the THI4 family. In terms of assembly, homooctamer; tetramer of dimers. It depends on Fe(2+) as a cofactor.

The enzyme catalyses hydrogen sulfide + glycine + NAD(+) = ADP-5-ethyl-4-methylthiazole-2-carboxylate + nicotinamide + 3 H2O + H(+). The protein operates within cofactor biosynthesis; thiamine diphosphate biosynthesis. Its function is as follows. Involved in the biosynthesis of the thiazole moiety of thiamine. Catalyzes the conversion of NAD and glycine to adenosine diphosphate 5-(2-hydroxyethyl)-4-methylthiazole-2-carboxylate (ADT), an adenylated thiazole intermediate, using free sulfide as a source of sulfur. In Saccharolobus islandicus (strain M.14.25 / Kamchatka #1) (Sulfolobus islandicus), this protein is Thiamine thiazole synthase.